The following is a 295-amino-acid chain: Inositol monophosphatase 1 (295 aa).

Positions 73, 92, 94, 95, and 231 each coordinate Mg(2+). Glutamate 73 contributes to the substrate binding site. Substrate is bound by residues 94–97 (IDGT) and aspartate 231.

This sequence belongs to the inositol monophosphatase superfamily. Mg(2+) serves as cofactor.

The protein localises to the cytoplasm. Its subcellular location is the nucleus. The enzyme catalyses a myo-inositol phosphate + H2O = myo-inositol + phosphate. The protein operates within polyol metabolism; myo-inositol biosynthesis; myo-inositol from D-glucose 6-phosphate: step 2/2. Its activity is regulated as follows. Inhibited by Li(+) and Na(+). In terms of biological role, responsible for the provision of inositol required for synthesis of phosphatidylinositol and polyphosphoinositides. This is Inositol monophosphatase 1 (INM1) from Saccharomyces cerevisiae (strain ATCC 204508 / S288c) (Baker's yeast).